The following is a 446-amino-acid chain: Probable glucan endo-1,3-beta-glucosidase eglC (446 aa).

The signal sequence occupies residues 1–18; sequence MQFTHLVALALALATSEA. Residue Glu-128 is the Proton donor of the active site. A glycan (N-linked (GlcNAc...) asparagine) is linked at Asn-183. Residue Glu-239 is the Nucleophile of the active site. Residues Asn-364 and Asn-370 are each glycosylated (N-linked (GlcNAc...) asparagine). Residues 393–416 form a disordered region; it reads SSGAGASGASGQSSSSTGSSSAPS. Residues 401 to 416 show a composition bias toward low complexity; sequence ASGQSSSSTGSSSAPS. The GPI-anchor amidated asparagine moiety is linked to residue Asn-423. Residues 424–446 constitute a propeptide, removed in mature form; the sequence is AASGLSGSIFGAVVAVCLALAAL.

It belongs to the glycosyl hydrolase 17 family. Post-translationally, the GPI-anchor is attached to the protein in the endoplasmic reticulum and serves to target the protein to the cell surface. There, the glucosamine-inositol phospholipid moiety is cleaved off and the GPI-modified mannoprotein is covalently attached via its lipidless GPI glycan remnant to the 1,6-beta-glucan of the outer cell wall layer.

The protein resides in the cell membrane. The protein localises to the secreted. It localises to the cell wall. It carries out the reaction Hydrolysis of (1-&gt;3)-beta-D-glucosidic linkages in (1-&gt;3)-beta-D-glucans.. Its function is as follows. Glucanases play a role in cell expansion during growth, in cell-cell fusion during mating, and in spore release during sporulation. This enzyme may be involved in beta-glucan degradation and also function biosynthetically as a transglycosylase. This chain is Probable glucan endo-1,3-beta-glucosidase eglC (eglC), found in Aspergillus fumigatus (strain ATCC MYA-4609 / CBS 101355 / FGSC A1100 / Af293) (Neosartorya fumigata).